The following is a 107-amino-acid chain: Guanine nucleotide-binding protein G(I)/G(S)/G(O) subunit gamma-14 (107 aa).

The region spanning 69 to 107 is the G protein gamma domain; the sequence is KMAADLLKFCTEQAKNDPFLVGIPAATNSFKEKKPYAIL.

It belongs to the G protein gamma family. As to quaternary structure, g proteins are composed of 3 units; alpha, beta and gamma.

The protein resides in the cell membrane. Functionally, guanine nucleotide-binding proteins (G proteins) are involved as a modulator or transducer in various transmembrane signaling systems. The beta and gamma chains are required for the GTPase activity, for replacement of GDP by GTP, and for G protein-effector interaction. The protein is Guanine nucleotide-binding protein G(I)/G(S)/G(O) subunit gamma-14 of Homo sapiens (Human).